The chain runs to 229 residues: Lytic polysaccharide monooxygenase-like protein ham-7 (229 aa).

The first 17 residues, 1–17 (MLTSTLLALASAALASA), serve as a signal peptide directing secretion. Residue H18 coordinates Cu(2+). 2 disulfides stabilise this stretch: C47-C157 and C122-C178. Residues N55, N98, N139, N174, and N180 are each glycosylated (N-linked (GlcNAc...) asparagine). Residue S206 is the site of GPI-anchor amidated serine attachment. A propeptide spans 207 to 229 (AAASLARMAGWVPLVAGGLWLML) (removed in mature form).

The protein belongs to the X325 family. Cu(2+) is required as a cofactor.

It is found in the cell membrane. Its function is as follows. Lytic polysaccharide monooxygenase-like protein that has diverged to biological functions other than polysaccharide degradation since it does not perform oxidative cleavage of polysaccharides. Acts as the major cell wall sensor that regulates MAK-1-dependent hyphal anastomosis, the fusion of hyphal cells. May also act as a cell surface-bound protein that functions in the copper-accumulation pathway. In Neurospora crassa (strain ATCC 24698 / 74-OR23-1A / CBS 708.71 / DSM 1257 / FGSC 987), this protein is Lytic polysaccharide monooxygenase-like protein ham-7.